The primary structure comprises 310 residues: Manganese ABC transporter substrate-binding lipoprotein PsaA (310 aa).

Residues 1–20 (MKKIASVLALFVALLFGLLA) form the signal peptide. Cys21 carries the N-palmitoyl cysteine lipid modification. Cys21 carries the S-diacylglycerol cysteine lipid modification. Positions 68, 140, 206, and 281 each coordinate Mn(2+).

It belongs to the bacterial solute-binding protein 9 family. Lipoprotein receptor antigen (Lrai) subfamily.

The protein resides in the cell membrane. Functionally, part of the ATP-binding cassette (ABC) transport system PsaABC involved in manganese import. Binds manganese with high affinity and specificity and delivers it to the membrane permease for translocation into the cytoplasm. Also acts as an adhesin which is involved on adherence to extracellular matrix. This chain is Manganese ABC transporter substrate-binding lipoprotein PsaA, found in Streptococcus pneumoniae.